A 271-amino-acid chain; its full sequence is 4-hydroxy-tetrahydrodipicolinate reductase (271 aa).

NAD(+)-binding positions include 11-16 (GAAGRM), E37, 102-104 (GTT), and 126-129 (AGNM). Residue H159 is the Proton donor/acceptor of the active site. Residue H160 coordinates (S)-2,3,4,5-tetrahydrodipicolinate. The active-site Proton donor is K163. Position 169-170 (169-170 (GT)) interacts with (S)-2,3,4,5-tetrahydrodipicolinate.

The protein belongs to the DapB family.

It is found in the cytoplasm. The catalysed reaction is (S)-2,3,4,5-tetrahydrodipicolinate + NAD(+) + H2O = (2S,4S)-4-hydroxy-2,3,4,5-tetrahydrodipicolinate + NADH + H(+). It catalyses the reaction (S)-2,3,4,5-tetrahydrodipicolinate + NADP(+) + H2O = (2S,4S)-4-hydroxy-2,3,4,5-tetrahydrodipicolinate + NADPH + H(+). The protein operates within amino-acid biosynthesis; L-lysine biosynthesis via DAP pathway; (S)-tetrahydrodipicolinate from L-aspartate: step 4/4. Functionally, catalyzes the conversion of 4-hydroxy-tetrahydrodipicolinate (HTPA) to tetrahydrodipicolinate. This chain is 4-hydroxy-tetrahydrodipicolinate reductase, found in Parvibaculum lavamentivorans (strain DS-1 / DSM 13023 / NCIMB 13966).